The sequence spans 253 residues: uncharacterized protein (253 aa).

The interval 211-241 (TTRRKRYREDRDSGEDLGAESKRGNGSVRYT) is disordered.

This is an uncharacterized protein from Ictalurid herpesvirus 1 (strain Auburn) (IcHV-1).